A 197-amino-acid polypeptide reads, in one-letter code: dITP/XTP pyrophosphatase (197 aa).

9–14 (TNNLNK) provides a ligand contact to substrate. 2 residues coordinate Mg(2+): Glu42 and Asp71. Asp71 (proton acceptor) is an active-site residue. Substrate-binding positions include Ser72, 153-156 (FGYD), Lys176, and 181-182 (HR).

The protein belongs to the HAM1 NTPase family. As to quaternary structure, homodimer. The cofactor is Mg(2+).

It catalyses the reaction XTP + H2O = XMP + diphosphate + H(+). It carries out the reaction dITP + H2O = dIMP + diphosphate + H(+). The enzyme catalyses ITP + H2O = IMP + diphosphate + H(+). Its function is as follows. Pyrophosphatase that catalyzes the hydrolysis of nucleoside triphosphates to their monophosphate derivatives, with a high preference for the non-canonical purine nucleotides XTP (xanthosine triphosphate), dITP (deoxyinosine triphosphate) and ITP. Seems to function as a house-cleaning enzyme that removes non-canonical purine nucleotides from the nucleotide pool, thus preventing their incorporation into DNA/RNA and avoiding chromosomal lesions. This is dITP/XTP pyrophosphatase from Leptospira interrogans serogroup Icterohaemorrhagiae serovar copenhageni (strain Fiocruz L1-130).